Here is a 121-residue protein sequence, read N- to C-terminus: Large ribosomal subunit protein bL20 (121 aa).

It belongs to the bacterial ribosomal protein bL20 family.

In terms of biological role, binds directly to 23S ribosomal RNA and is necessary for the in vitro assembly process of the 50S ribosomal subunit. It is not involved in the protein synthesizing functions of that subunit. The protein is Large ribosomal subunit protein bL20 of Polynucleobacter asymbioticus (strain DSM 18221 / CIP 109841 / QLW-P1DMWA-1) (Polynucleobacter necessarius subsp. asymbioticus).